The chain runs to 484 residues: Poly(A) RNA polymerase GLD2 (484 aa).

2 positions are modified to phosphoserine: Ser62 and Ser69. Residues 76–92 (KRLSDEKNLPLDGKRQR) carry the Nuclear localization signal motif. At Ser95 the chain carries Phosphoserine. Mg(2+) is bound by residues Asp213 and Asp215. Residues 386–440 (NLGDLLLGFLKYYATEFDWNSQMISVREAKAIPRPDGIEWRNKYICVEEPFDGTN) form the PAP-associated domain.

It belongs to the DNA polymerase type-B-like family. GLD2 subfamily. As to quaternary structure, interacts with CPEB1, CPEB2, CPSF1 and PABPC1. Interacts with QKI isoform QKI7; promoting recruitment to miRNA miR-122 and miR-122 stabilization. Mg(2+) is required as a cofactor. The cofactor is Mn(2+).

The protein localises to the cytoplasm. The protein resides in the nucleus. It catalyses the reaction RNA(n) + ATP = RNA(n)-3'-adenine ribonucleotide + diphosphate. Its function is as follows. Cytoplasmic poly(A) RNA polymerase that adds successive AMP monomers to the 3'-end of specific RNAs, forming a poly(A) tail. In contrast to the canonical nuclear poly(A) RNA polymerase, it only adds poly(A) to selected cytoplasmic mRNAs. Does not play a role in replication-dependent histone mRNA degradation. Adds a single nucleotide to the 3' end of specific miRNAs, monoadenylation stabilizes and prolongs the activity of some but not all miRNAs. This Bos taurus (Bovine) protein is Poly(A) RNA polymerase GLD2.